The primary structure comprises 246 residues: Proteasome subunit alpha type-5 (246 aa).

This sequence belongs to the peptidase T1A family. The 26S proteasome consists of a 20S proteasome core and two 19S regulatory subunits. The 20S proteasome core is composed of 28 subunits that are arranged in four stacked rings, resulting in a barrel-shaped structure. The two end rings are each formed by seven alpha subunits, and the two central rings are each formed by seven beta subunits. The catalytic chamber with the active sites is on the inside of the barrel.

It localises to the cytoplasm. Its subcellular location is the nucleus. The proteasome is a multicatalytic proteinase complex which is characterized by its ability to cleave peptides with Arg, Phe, Tyr, Leu, and Glu adjacent to the leaving group at neutral or slightly basic pH. The proteasome has an ATP-dependent proteolytic activity. In Trypanosoma brucei brucei, this protein is Proteasome subunit alpha type-5.